The sequence spans 114 residues: Ig kappa chain V region AH80-5 (114 aa).

Positions 1–22 (IVMTQTPSSKSVPVGDTVTINC) are framework-1. The tract at residues 23-35 (QAAQSVYSNNRLS) is complementarity-determining-1. A framework-2 region spans residues 36 to 50 (WFQQKPGQPPKGLIY). The complementarity-determining-2 stretch occupies residues 51-57 (YASTLAS). The interval 58–93 (GVQQDPSRFKGSGSGTQFTLTISDVQCBBAATVYYC) is framework-3. The tract at residues 94 to 103 (QGYKSSDTRA) is complementarity-determining-3. The tract at residues 104–113 (FGGGTEVVVK) is framework-4.

This chain is Ig kappa chain V region AH80-5, found in Oryctolagus cuniculus (Rabbit).